We begin with the raw amino-acid sequence, 509 residues long: ATP synthase subunit alpha (509 aa).

Glycine 169–threonine 176 contributes to the ATP binding site.

The protein belongs to the ATPase alpha/beta chains family. F-type ATPases have 2 components, CF(1) - the catalytic core - and CF(0) - the membrane proton channel. CF(1) has five subunits: alpha(3), beta(3), gamma(1), delta(1), epsilon(1). CF(0) has three main subunits: a(1), b(2) and c(9-12). The alpha and beta chains form an alternating ring which encloses part of the gamma chain. CF(1) is attached to CF(0) by a central stalk formed by the gamma and epsilon chains, while a peripheral stalk is formed by the delta and b chains.

The protein resides in the cell inner membrane. The catalysed reaction is ATP + H2O + 4 H(+)(in) = ADP + phosphate + 5 H(+)(out). Functionally, produces ATP from ADP in the presence of a proton gradient across the membrane. The alpha chain is a regulatory subunit. This Methylorubrum extorquens (strain CM4 / NCIMB 13688) (Methylobacterium extorquens) protein is ATP synthase subunit alpha.